Reading from the N-terminus, the 183-residue chain is TATA-box-binding protein 1 (183 aa).

A run of 2 repeats spans residues 8–84 (IENV…AKKL) and 99–177 (VQNI…RQQL).

The protein belongs to the TBP family.

In terms of biological role, general factor that plays a role in the activation of archaeal genes transcribed by RNA polymerase. Binds specifically to the TATA box promoter element which lies close to the position of transcription initiation. This Methanosarcina acetivorans (strain ATCC 35395 / DSM 2834 / JCM 12185 / C2A) protein is TATA-box-binding protein 1.